Reading from the N-terminus, the 367-residue chain is Alanine racemase (367 aa).

Catalysis depends on K40, which acts as the Proton acceptor; specific for D-alanine. Residue K40 is modified to N6-(pyridoxal phosphate)lysine. Substrate is bound at residue R136. Catalysis depends on Y263, which acts as the Proton acceptor; specific for L-alanine. M310 is a binding site for substrate.

Belongs to the alanine racemase family. Requires pyridoxal 5'-phosphate as cofactor.

It catalyses the reaction L-alanine = D-alanine. It participates in amino-acid biosynthesis; D-alanine biosynthesis; D-alanine from L-alanine: step 1/1. Its function is as follows. Catalyzes the interconversion of L-alanine and D-alanine. May also act on other amino acids. This chain is Alanine racemase (alr), found in Lactococcus lactis subsp. cremoris (strain MG1363).